Reading from the N-terminus, the 226-residue chain is 3-dehydroquinate dehydratase (226 aa).

Residues 33–35 and R65 each bind 3-dehydroquinate; that span reads EWR. H121 serves as the catalytic Proton donor/acceptor. K146 serves as the catalytic Schiff-base intermediate with substrate. R188, S207, and Q211 together coordinate 3-dehydroquinate.

It belongs to the type-I 3-dehydroquinase family. As to quaternary structure, homodimer.

The catalysed reaction is 3-dehydroquinate = 3-dehydroshikimate + H2O. It participates in metabolic intermediate biosynthesis; chorismate biosynthesis; chorismate from D-erythrose 4-phosphate and phosphoenolpyruvate: step 3/7. Functionally, involved in the third step of the chorismate pathway, which leads to the biosynthesis of aromatic amino acids. Catalyzes the cis-dehydration of 3-dehydroquinate (DHQ) and introduces the first double bond of the aromatic ring to yield 3-dehydroshikimate. The protein is 3-dehydroquinate dehydratase of Lactococcus lactis subsp. lactis (strain IL1403) (Streptococcus lactis).